Reading from the N-terminus, the 531-residue chain is Tryptophan 6-halogenase ThaL (531 aa).

8 residues coordinate FAD: glycine 13, threonine 15, alanine 16, alanine 39, isoleucine 42, isoleucine 45, valine 47, and alanine 50. Lysine 79 is an active-site residue. Proline 111 is an L-tryptophan binding site. The FAD site is built by methionine 198 and leucine 349. Residues serine 360 and glycine 361 each contribute to the chloride site. Isoleucine 362 is a binding site for FAD. Tyrosine 454, tyrosine 455, glutamate 461, and phenylalanine 465 together coordinate L-tryptophan.

This sequence belongs to the flavin-dependent halogenase family. Bacterial tryptophan halogenase subfamily. Homodimer. Monomer in solution.

It catalyses the reaction L-tryptophan + FADH2 + chloride + O2 = 6-chloro-L-tryptophan + FAD + 2 H2O. It carries out the reaction D-tryptophan + FADH2 + chloride + O2 = 6-chloro-D-tryptophan + FAD + 2 H2O. Its function is as follows. Involved in the biosynthesis of thienodolin, a plant growth-regulating compound. Catalyzes the chlorination of tryptophan (Trp) at C6 position to yield 6-chloro-tryptophan. It is also able to use bromide ions to generate monobrominated Trp. In vitro, accepts a wide range of amides and peptides carrying either L- or D-Trp at the N-terminus. The chain is Tryptophan 6-halogenase ThaL from Streptomyces albogriseolus.